The primary structure comprises 82 residues: uncharacterized protein (82 aa).

Positions 29–38 (TATKSTSSGS) are enriched in low complexity. The disordered stretch occupies residues 29 to 64 (TATKSTSSGSVPSFFTESTSTPLNQSKTNTSTLNKS). The span at 39-50 (VPSFFTESTSTP) shows a compositional bias: polar residues. Residues 51–64 (LNQSKTNTSTLNKS) show a composition bias toward low complexity.

This is an uncharacterized protein from Dictyostelium discoideum (Social amoeba).